Reading from the N-terminus, the 481-residue chain is Phototropic-responsive NPH3 family protein NPY4 (481 aa).

A BTB domain is found at 29 to 102 (TEIIIIIGNV…CYGITVTLNA (74 aa)). One can recognise an NPH3 domain in the interval 207 to 450 (DWWVEDLCEL…VQVLFFEQIR (244 aa)). Phosphotyrosine is present on Tyr391. The interval 456-481 (TGYSTPELTTTTLNTEDDEWDHEKEF) is disordered. The segment covering 460–469 (TPELTTTTLN) has biased composition (low complexity).

It belongs to the NPH3 family. In terms of tissue distribution, expressed in the hypocotyl cells that would differentiate into vascular bundles. Highly expressed in primary root tips and radicles.

The protein resides in the cell membrane. Its subcellular location is the cytoplasm. The protein localises to the cytosol. Its pathway is protein modification; protein ubiquitination. In terms of biological role, may act as a substrate-specific adapter of an E3 ubiquitin-protein ligase complex (CUL3-RBX1-BTB) which mediates the ubiquitination and subsequent proteasomal degradation of target proteins. Plays an essential role in auxin-mediated organogenesis and in root gravitropic responses through the control of PIN proteins (e.g. PIN1 and PIN2) polarity in the root tip endodermal cell layer and in shoot epidermis. Recruited to the plasma membrane by PINs (e.g. PIN1 and PIN2) and, in concert with AGC kinases-mediated (e.g. D6PK and PID) PINs phosphorylation, maintains their polarity through limiting lateral diffusion-based escape. This chain is Phototropic-responsive NPH3 family protein NPY4, found in Arabidopsis thaliana (Mouse-ear cress).